A 141-amino-acid polypeptide reads, in one-letter code: Hemoglobin subunit alpha-A (141 aa).

Residues 1–141 (VLSASDKANV…VGTVLTAKYR (141 aa)) form the Globin domain. Histidine 58 is an O2 binding site. Residue histidine 87 participates in heme b binding.

This sequence belongs to the globin family. As to quaternary structure, heterotetramer of two alpha chains and two beta chains. As to expression, red blood cells.

Its function is as follows. Involved in oxygen transport from the lung to the various peripheral tissues. The polypeptide is Hemoglobin subunit alpha-A (HBAA) (Sturnus vulgaris (Starling)).